The sequence spans 644 residues: Exoribonuclease 2 (644 aa).

One can recognise an RNB domain in the interval Arg-189–Lys-516. The region spanning Asn-561–Ala-643 is the S1 motif domain.

The protein belongs to the RNR ribonuclease family. RNase II subfamily.

The protein localises to the cytoplasm. It catalyses the reaction Exonucleolytic cleavage in the 3'- to 5'-direction to yield nucleoside 5'-phosphates.. Functionally, involved in mRNA degradation. Hydrolyzes single-stranded polyribonucleotides processively in the 3' to 5' direction. This Salmonella choleraesuis (strain SC-B67) protein is Exoribonuclease 2.